Reading from the N-terminus, the 207-residue chain is Large ribosomal subunit protein uL4 (207 aa).

The disordered stretch occupies residues 49–78 (HAVKNRSAVRGGGKKPWRQKGTGRARQGSI). Positions 60–71 (GGKKPWRQKGTG) are enriched in basic residues.

This sequence belongs to the universal ribosomal protein uL4 family. Part of the 50S ribosomal subunit.

Functionally, one of the primary rRNA binding proteins, this protein initially binds near the 5'-end of the 23S rRNA. It is important during the early stages of 50S assembly. It makes multiple contacts with different domains of the 23S rRNA in the assembled 50S subunit and ribosome. In terms of biological role, forms part of the polypeptide exit tunnel. This Ligilactobacillus salivarius (strain UCC118) (Lactobacillus salivarius) protein is Large ribosomal subunit protein uL4.